The primary structure comprises 250 residues: Aquaporin (250 aa).

Residues 1-15 (MTRETLKTLQSTFGE) lie on the Cytoplasmic side of the membrane. The chain crosses the membrane as a helical span at residues 16-36 (MVASFVFGFAVYSALLGSALT). Residues 37-42 (EQSAAR) are Extracellular-facing. A helical transmembrane segment spans residues 43 to 63 (VIVGLTVGFSGICVIYSFCDV). The Cytoplasmic segment spans residues 64–86 (TVAHFNPAITLAAILTCKLGVLR). The NPA motif lies at 69 to 71 (NPA). The helical transmembrane segment at 87–107 (GIGYIVAQYIGFILAVCALLP) threads the bilayer. At 108–133 (CSPVGYKETLNIIRPTPSPFGGDNLN) the chain is on the extracellular side. Residues 134–154 (VFFTEFFLTAILVHVAFATAV) traverse the membrane as a helical segment. Residues 155–179 (NPYKPKTDTEGKFVDPDEEEPVDRR) lie on the Cytoplasmic side of the membrane. The chain crosses the membrane as a helical span at residues 180-200 (ITAPLCIGLTLGFLAFLGLAS). Topologically, residues 201-224 (SGGAFNPGLTLAPVIMSNTWNHFW) are extracellular. An NPG motif is present at residues 206-208 (NPG). Residues 225-245 (AYFAGQYLGGFVGGLLQVLVL) form a helical membrane-spanning segment. At 246-250 (YKLSF) the chain is on the cytoplasmic side.

It belongs to the MIP/aquaporin (TC 1.A.8) family.

It localises to the cell membrane. Its function is as follows. Water channel required to facilitate the transport of water across membranes. Involved in osmotolerance. The chain is Aquaporin (AQP) from Encephalitozoon cuniculi (strain GB-M1) (Microsporidian parasite).